The following is a 345-amino-acid chain: Cuticle collagen 14 (345 aa).

3 triple-helical region regions span residues Gly-156–Pro-185, Gly-207–Tyr-263, and Gly-268–Cys-333. A disordered region spans residues Ala-161 to Tyr-345. Pro residues-rich tracts occupy residues Ile-179–Asp-191, Pro-198–Ala-223, and Arg-278–Pro-290. Gly residues predominate over residues Gly-292 to Gly-304.

Belongs to the cuticular collagen family. Collagen polypeptide chains are complexed within the cuticle by disulfide bonds and other types of covalent cross-links.

Nematode cuticles are composed largely of collagen-like proteins. The cuticle functions both as an exoskeleton and as a barrier to protect the worm from its environment. The polypeptide is Cuticle collagen 14 (col-14) (Caenorhabditis elegans).